Consider the following 540-residue polypeptide: GMP synthase [glutamine-hydrolyzing] (540 aa).

Residues 26-216 form the Glutamine amidotransferase type-1 domain; it reads LIIILDFGSQ…VYHICDCEPT (191 aa). Cys-103 (nucleophile) is an active-site residue. Active-site residues include His-190 and Glu-192. Positions 217-415 constitute a GMPS ATP-PPase domain; the sequence is WTTAAFVEEA…IGLPEEIVQR (199 aa). Position 244-250 (244-250) interacts with ATP; that stretch reads SGGVDSS.

Homodimer.

It carries out the reaction XMP + L-glutamine + ATP + H2O = GMP + L-glutamate + AMP + diphosphate + 2 H(+). Its pathway is purine metabolism; GMP biosynthesis; GMP from XMP (L-Gln route): step 1/1. In terms of biological role, catalyzes the synthesis of GMP from XMP. The protein is GMP synthase [glutamine-hydrolyzing] of Nostoc punctiforme (strain ATCC 29133 / PCC 73102).